We begin with the raw amino-acid sequence, 534 residues long: EH domain-containing protein 1 (534 aa).

M1 bears the N-acetylmethionine mark. Residues 55 to 286 (FDNKPMVLLV…DLFKDIQSLP (232 aa)) form the Dynamin-type G domain. Residues 65–72 (GQYSTGKT) form a G1 motif region. ATP is bound at residue 65–72 (GQYSTGKT). Positions 91–92 (EP) are G2 motif. The interval 153–156 (DTPG) is G3 motif. Residues 198-227 (DEFSEVIKALKNHEDKIRVVLNKADQIETQ) are a coiled coil. Residues 219-222 (NKAD) are G4 motif. K220 is a binding site for ATP. I243 is a region of interest (G5 motif). W258 provides a ligand contact to ATP. Residues 444–532 (DKPTYDEIFY…PHLVPPSKRR (89 aa)) form the EH domain. Phosphoserine is present on S456. Positions 476-511 (LPNTVLGKIWKLADVDRDGLLDDEEFALANHLIKVK) constitute an EF-hand domain. D489, D491, D493, and E500 together coordinate Ca(2+).

This sequence belongs to the TRAFAC class dynamin-like GTPase superfamily. Dynamin/Fzo/YdjA family. EHD subfamily. As to quaternary structure, homooligomer, and heterooligomer with EHD2, EHD3 and EHD4, ATP-binding is required for heterooligomerization. Interacts (via EH domain) with MICALL1 (via NPF1 motif); the interaction is direct and recruits EHD1 to membranes. Interacts with RAB35; the interaction is indirect through MICALL1 and recruits EHD1 to membranes. Interacts (via EH domain) with PACSIN2 (via NPF motifs); regulates localization to tubular recycling endosome membranes. Interacts with PACSIN1. Interacts with RAB8A. Interacts with FER1L5 (via second C2 domain). Interacts with MYOF. Interacts with ZFYVE20. Interacts (via EH domain) with RAB11FIP2.

It is found in the recycling endosome membrane. It localises to the early endosome membrane. Its subcellular location is the cell membrane. The protein resides in the cell projection. The protein localises to the cilium membrane. Its function is as follows. ATP- and membrane-binding protein that controls membrane reorganization/tubulation upon ATP hydrolysis. Acts in early endocytic membrane fusion and membrane trafficking of recycling endosomes. Recruited to endosomal membranes upon nerve growth factor stimulation, indirectly regulates neurite outgrowth. Plays a role in myoblast fusion. Involved in the unidirectional retrograde dendritic transport of endocytosed BACE1 and in efficient sorting of BACE1 to axons implicating a function in neuronal APP processing. Plays a role in the formation of the ciliary vesicle (CV), an early step in cilium biogenesis. Proposed to be required for the fusion of distal appendage vesicles (DAVs) to form the CV by recruiting SNARE complex component SNAP29. Is required for recruitment of transition zone proteins CEP290, RPGRIP1L, TMEM67 and B9D2, and of IFT20 following DAV reorganization before Rab8-dependent ciliary membrane extension. Required for the loss of CCP110 form the mother centriole essential for the maturation of the basal body during ciliogenesis. This is EH domain-containing protein 1 from Bos taurus (Bovine).